The chain runs to 271 residues: 2-dehydro-3-deoxyphosphooctonate aldolase (271 aa).

Belongs to the KdsA family.

The protein localises to the cytoplasm. It carries out the reaction D-arabinose 5-phosphate + phosphoenolpyruvate + H2O = 3-deoxy-alpha-D-manno-2-octulosonate-8-phosphate + phosphate. Its pathway is carbohydrate biosynthesis; 3-deoxy-D-manno-octulosonate biosynthesis; 3-deoxy-D-manno-octulosonate from D-ribulose 5-phosphate: step 2/3. It functions in the pathway bacterial outer membrane biogenesis; lipopolysaccharide biosynthesis. The sequence is that of 2-dehydro-3-deoxyphosphooctonate aldolase from Campylobacter jejuni subsp. jejuni serotype O:2 (strain ATCC 700819 / NCTC 11168).